A 144-amino-acid polypeptide reads, in one-letter code: Ribosome maturation factor RimP (144 aa).

This sequence belongs to the RimP family.

Its subcellular location is the cytoplasm. Functionally, required for maturation of 30S ribosomal subunits. This is Ribosome maturation factor RimP from Azoarcus sp. (strain BH72).